The primary structure comprises 169 residues: Large ribosomal subunit protein uL5 (169 aa).

It belongs to the universal ribosomal protein uL5 family. As to quaternary structure, part of the 50S ribosomal subunit; contacts the 5S rRNA and probably tRNA. Forms a bridge to the 30S subunit in the 70S ribosome.

In terms of biological role, this is one of the proteins that bind and probably mediate the attachment of the 5S RNA into the large ribosomal subunit, where it forms part of the central protuberance. In the 70S ribosome it contacts protein S13 of the 30S subunit (bridge B1b), connecting the 2 subunits; this bridge is implicated in subunit movement. May contact the P site tRNA; the 5S rRNA and some of its associated proteins might help stabilize positioning of ribosome-bound tRNAs. In Methanosarcina mazei (strain ATCC BAA-159 / DSM 3647 / Goe1 / Go1 / JCM 11833 / OCM 88) (Methanosarcina frisia), this protein is Large ribosomal subunit protein uL5.